We begin with the raw amino-acid sequence, 882 residues long: Valine--tRNA ligase (882 aa).

The 'HIGH' region motif lies at 45 to 55 (PNVTGKLHLGH). Residues 519 to 523 (KMSKS) carry the 'KMSKS' region motif. Lys-522 contacts ATP. Residues 808–882 (LADLLNVEEE…RIAEMQKLVK (75 aa)) are a coiled coil.

Belongs to the class-I aminoacyl-tRNA synthetase family. ValS type 1 subfamily. Monomer.

The protein resides in the cytoplasm. It carries out the reaction tRNA(Val) + L-valine + ATP = L-valyl-tRNA(Val) + AMP + diphosphate. Functionally, catalyzes the attachment of valine to tRNA(Val). As ValRS can inadvertently accommodate and process structurally similar amino acids such as threonine, to avoid such errors, it has a 'posttransfer' editing activity that hydrolyzes mischarged Thr-tRNA(Val) in a tRNA-dependent manner. This is Valine--tRNA ligase from Streptococcus pyogenes serotype M3 (strain ATCC BAA-595 / MGAS315).